The following is a 585-amino-acid chain: MFSVLKKLGWFFKAYWLRYTIAIVLLLAVNVIEMFPPKLLGNAIDDMKAGAFTAEGLLFYIGIFFVLTAAVYIMSYFWMHQLFGGANLMEKILRTKLMGHLLTMSPPFYEKNRTGDLMARGTNDLQAVSLTTGFGILTLVDSTMFMMTIFLTMGFLISWKLTFAAIIPLPVMAIAISLYGSKIHERFTEAQNAFGALNDRVLESVSGVRVIRAYVQETNDVRRFNEMTADVYQKNMKVAFIDSLFEPTVKLLVGASYLIGLGYGAFLVFRNELTLGELVSFNVYLGMMIWPMFAIGELINVMQRGNASLDRVNETLSYETDVTDPKQPADLKEPGDIVFSHVSFTYPSSTSDNLQDISFTVRKGQTVGIAGKTGSGKTTIIKQLLRQYPPGEGSITFSGVPIQQIPLDRLRGWIGYVPQDHLLFSRTVKENILYGKQDATDKEVQQAIAEAHFEKDLHMLPSGLETMVGEKGVALSGGQKQRISIARALMANPEILILDDSLSAVDAKTEAAIIKNIRENRKGKTTFILTHRLSAVEHADLILVMDGGVIAERGTHQELLANNGWYREQYERQQLFTAEEGGAGA.

An ABC transmembrane type-1 domain is found at 19-304 (YTIAIVLLLA…IGELINVMQR (286 aa)). A run of 6 helical transmembrane segments spans residues 21 to 41 (IAIV…KLLG), 57 to 77 (LLFY…MSYF), 127 to 147 (AVSL…MFMM), 149 to 169 (IFLT…IIPL), 249 to 269 (VKLL…FLVF), and 279 to 299 (VSFN…GELI). The region spanning 337–572 (IVFSHVSFTY…NGWYREQYER (236 aa)) is the ABC transporter domain. 371–378 (GKTGSGKT) is a binding site for ATP.

Belongs to the ABC transporter superfamily. As to quaternary structure, heterodimer composed of YheH and YheI.

The protein localises to the cell membrane. With respect to regulation, inhibited by ortho-vanadate. In terms of biological role, involved in the transport of four structurally unrelated drugs, including doxorubicin and mitoxantrone. Transmembrane domains (TMD) form a pore in the membrane and the ATP-binding domain (NBD) is responsible for energy generation. The protein is Probable multidrug resistance ABC transporter ATP-binding/permease protein YheI (yheI) of Bacillus subtilis (strain 168).